Here is a 90-residue protein sequence, read N- to C-terminus: uncharacterized protein (90 aa).

Residues 15–34 traverse the membrane as a helical segment; that stretch reads HVLAISTFIATAAVASYFTT. The tract at residues 34–65 is disordered; that stretch reads TKPKTKNEGKNSSALSQQKSGESSNSDAMGKD. Over residues 43–60 the composition is skewed to polar residues; it reads KNSSALSQQKSGESSNSD. Residue Asn44 is glycosylated (N-linked (GlcNAc...) asparagine).

The protein resides in the mitochondrion membrane. This is an uncharacterized protein from Saccharomyces cerevisiae (strain ATCC 204508 / S288c) (Baker's yeast).